The sequence spans 168 residues: uncharacterized protein (168 aa).

Residues 1-15 (MKEASDREEAPKMVE) show a composition bias toward basic and acidic residues. A disordered region spans residues 1 to 36 (MKEASDREEAPKMVEKNYSTGFRKAHGEKDQSVTKP).

The protein localises to the cytoplasm. This is an uncharacterized protein from Saccharomyces cerevisiae (strain ATCC 204508 / S288c) (Baker's yeast).